We begin with the raw amino-acid sequence, 252 residues long: Chitooligosaccharide deacetylase (252 aa).

Mg(2+)-binding residues include H61 and H125.

The protein belongs to the YdjC deacetylase family. ChbG subfamily. As to quaternary structure, homodimer. It depends on Mg(2+) as a cofactor.

The protein resides in the cytoplasm. It carries out the reaction N,N'-diacetylchitobiose + H2O = N-acetyl-beta-D-glucosaminyl-(1-&gt;4)-D-glucosamine + acetate. It catalyses the reaction diacetylchitobiose-6'-phosphate + H2O = N'-monoacetylchitobiose-6'-phosphate + acetate. Its pathway is glycan degradation; chitin degradation. Involved in the degradation of chitin. ChbG is essential for growth on the acetylated chitooligosaccharides chitobiose and chitotriose but is dispensable for growth on cellobiose and chitosan dimer, the deacetylated form of chitobiose. Deacetylation of chitobiose-6-P and chitotriose-6-P is necessary for both the activation of the chb promoter by the regulatory protein ChbR and the hydrolysis of phosphorylated beta-glucosides by the phospho-beta-glucosidase ChbF. Catalyzes the removal of only one acetyl group from chitobiose-6-P to yield monoacetylchitobiose-6-P, the inducer of ChbR and the substrate of ChbF. The chain is Chitooligosaccharide deacetylase from Salmonella heidelberg (strain SL476).